The following is a 368-amino-acid chain: MWSATMERITVNLAERSYPITIGAGLFEDSAHLSSLTAGQKVVVITNVTVAPLYADKILSLLQSLGCQASLLELPDGEQYKSLDTFNQVMSFLLEGSFARDVVVIALGGGVIGDLVGFSAACYQRGVDFIQIPTTLLSQVDSSVGGKTAVNHPLGKNMIGAFYQPKSVIIDTNCLKTLPEREFAAGIAEVIKYGIIYDAEFFTWLDEHLDALYSLDEQALTYAIARCCEIKAEVVAQDEKESGIRALLNLGHTFGHAIEAELGYGNWLHGEAVAAGTVMAARTAQLQGMIDQQQFDKIFSILSRAKLPVHTPESMTFDDFMTHMMRDKKVLSGKLRLVLPSSIGTAEVVADVPQEVIRQAIEDCRTIN.

NAD(+) is bound by residues 76–81 (DGEQYK), 110–114 (GVIGD), 134–135 (TT), lysine 147, lysine 156, and 174–177 (CLKT). Residues glutamate 189, histidine 252, and histidine 269 each contribute to the Zn(2+) site.

The protein belongs to the sugar phosphate cyclases superfamily. Dehydroquinate synthase family. The cofactor is NAD(+). Co(2+) serves as cofactor. It depends on Zn(2+) as a cofactor.

It is found in the cytoplasm. The enzyme catalyses 7-phospho-2-dehydro-3-deoxy-D-arabino-heptonate = 3-dehydroquinate + phosphate. The protein operates within metabolic intermediate biosynthesis; chorismate biosynthesis; chorismate from D-erythrose 4-phosphate and phosphoenolpyruvate: step 2/7. In terms of biological role, catalyzes the conversion of 3-deoxy-D-arabino-heptulosonate 7-phosphate (DAHP) to dehydroquinate (DHQ). The polypeptide is 3-dehydroquinate synthase (Vibrio vulnificus (strain YJ016)).